Consider the following 98-residue polypeptide: Minor capsid protein P13 (98 aa).

Positions 3–23 are hydrophobic; the sequence is KITPFLIAAVVAVIVLAVWLF.

In terms of assembly, interacts with the major capsid protein.

It localises to the virion. Its function is as follows. One of the minor capsid proteins that constitute a network internal to the major capsid proteins and outside the lipid membrane. The minor capsid protein P13 does not serve a cross-linking function between neighboring capsomers, it may play a role in the viral capsid assembly. This chain is Minor capsid protein P13, found in Chlorella (PBCV-1).